Consider the following 178-residue polypeptide: Probable major fimbrial subunit LpfA (178 aa).

The signal sequence occupies residues 1–24 (MEFFMKKVVFALTALALTSGTVFA).

The protein belongs to the fimbrial protein family.

It localises to the fimbrium. In terms of biological role, part of the lpfABCC'DE fimbrial operon. LP fimbriae may participate in the interaction with eukaryotic cells by assisting in microcolony formation. The protein is Probable major fimbrial subunit LpfA (lpfA) of Escherichia coli O157:H7.